A 265-amino-acid chain; its full sequence is Eukaryotic translation initiation factor 3 subunit J (265 aa).

Positions 1-71 (MSWDDEAING…KESSADRALL (71 aa)) are disordered. Residues 23-32 (WDAEIGDDEP) are compositionally biased toward acidic residues. Basic and acidic residues predominate over residues 42 to 71 (EEKKPAPKPKKEQPKKVKKGKESSADRALL). Serine 65 carries the post-translational modification Phosphoserine. Position 75 is a phosphothreonine (threonine 75). Phosphoserine is present on serine 92. Residues 219–265 (VRGGTATGGAGKKKVKGKTNLGGAFKKDQDFDLDGPDDFEFGDDDFM) are disordered. Arginine 220 is subject to Omega-N-methylarginine. A compositionally biased stretch (acidic residues) spans 249 to 265 (FDLDGPDDFEFGDDDFM).

It belongs to the eIF-3 subunit J family. Probable component of the eukaryotic translation initiation factor 3 (eIF-3) complex. Is not part of the eIF-3 core complex, with which it is associated in substochiometric amounts.

It is found in the cytoplasm. Functionally, component of the eukaryotic translation initiation factor 3 (eIF-3) complex, which is involved in protein synthesis of a specialized repertoire of mRNAs and, together with other initiation factors, stimulates binding of mRNA and methionyl-tRNAi to the 40S ribosome. The eIF-3 complex specifically targets and initiates translation of a subset of mRNAs involved in cell proliferation. The chain is Eukaryotic translation initiation factor 3 subunit J from Saccharomyces cerevisiae (strain ATCC 204508 / S288c) (Baker's yeast).